The primary structure comprises 505 residues: Putative thymidine phosphorylase (505 aa).

This sequence belongs to the thymidine/pyrimidine-nucleoside phosphorylase family. Type 2 subfamily.

The enzyme catalyses thymidine + phosphate = 2-deoxy-alpha-D-ribose 1-phosphate + thymine. The protein is Putative thymidine phosphorylase of Hahella chejuensis (strain KCTC 2396).